We begin with the raw amino-acid sequence, 1756 residues long: MLSFSVVKSAGSAGNYYTDKDNYYVLGSMGERWAGQGAEQLGLQGSVDKDVFTRLLEGRLPDGADLSRMQDGSNKHRPGYDLTFSAPKSVSMMAMLGGDKRLIDAHNQAVDFAVRQVEALASTRVMTDGQSETVLTGNLVMALFNHDTSRDQDPQLHTHVVVANVTQHNGEWKTLSSDKVGKTGFSENVLANRIAFGKIYQSELRQRVEALGYETEVVGKHGMWEMPGVPVEAFSSRSQAIREAVGEDASLKSRDVAALDTRKSKHHVDPEVRMAEWMQTLKETGFDIRAYRDAADQRAEIRTQAPGPASQDGPDVQQAVTQAIAGLSERKVQFTYTDVLARTVGILPPENGVIERARAGIDEAISREQLIPLDREKGLFTSGIHVLDELSVRALSRDIMKQNRVTVHPEKSVPRTAGYSDAVSVLAQDRPSLAIVSGQGGAAGQRERVAELVMMAREQGREVQIIAADRRSQLNLKQDERLSGELITGRRQLQEGMVFTSGSTFIVDQGEKLSLKETLTLLDGAARHNVQVLITDSGQRTGTGSALMAMKDAGVNTYRWQGGEQRPATIISEPDRNVRYDRLAGDFAASVKAGEESVAQVSGVREQAILTQAIRSELKTQGVLGHPEVTMTALSPVWLDSRSRYLRDMYRPGMVMEQWNPETRSHDRYVIDRVTAQSHSLTLRDAQGETQVVRISSLDSSWSLFRPEKMPVADGERLRVTGKIPGLRVSGGDRLQVASVSEDAMTVVVPGRAEPATLPVADSPFTALKLENGWVETPGHSVSDSATVFASVTQMAMDNATLNGLARSGRDVRLYSSLDETRTAEKLARHPSFTVVSEQIKARAGETSLETAISLQKTGLHTPAQQAIHLALPVLESKNLAFSMVDLLTEAKSFAAEGTGFTELGGEINAQIKRGDLLYVDVAKGYGTGLLVSRASYEAEKSILRHILEGKEAVTPLMERVPGELMETLTSGPRAATRMILETSDRFTVVQGYAGVGKTTQFRAVMSAVNMLPASERPRVVGLGPTHRAVGEMRSAGVDAQTLASFLHDTQLQQRSGETPDFSNTLFLLDESSMVGNTDMARAYALIAAGGGRAVASGDTDQLQAIAPGQPFRLQQTRSAADVVIMKEIVRQTPELREAVYSLINRDVERALSGLESVKPSQVPRQEGAWAPEHSVTEFSHSQEAKLAEAQQKAMLKGETFPDVPMTLYEAIVRDYTGRTPEAREQTLIVTHLNEDRRVLNSMIHDAREKAGELGKEQVMVPVLNTANIRDGELRRLSTWENNPDALALVDSVYHRIAGISKDDGLITLEDAEGNTRLISPREAVAEGVTLYTPDKIRVGTGDRMRFTKSDRERGYVANSVWTVTAVSGDSVTLSDGQQTRVIRPGQERAEQHIDLAYAITAHGAQGASETFAIALEGTEGNRKLMAGFESAYVALSRMKQHVQVYTDNRQGWTDAINNAVQKGTAHDVLEPKPDREVMNAQRLFSTARELRDVAAGRAVLRQAGLAGGDSPARFIAPGRKYPQPYVALPAFDRNGKSAGIWLNPLTTDDGNGLRGFSGEGRVKGSGDAQFVALQGSRNGESLLADNMQDGVRIARDNPDSGVVVRIAGEGRPWNPGAITGGRVWGDIPDSSVQPGAGNGEPVTAEVLAQRQAEEAIRRETERRADEIVRKMAENKPDLPDGKTEQAVREIAGQERDRADITEREAALPESVLRESQREQEAVREVARENLLQERLQQIERDMVRDLQKEKTLGGD.

The segment at 1–330 (MLSFSVVKSA…TQAIAGLSER (330 aa)) is DNA relaxase. Tyrosine 16 serves as the catalytic O-(5'-phospho-DNA)-tyrosine intermediate; for relaxase activity. Tyrosine 17 serves as the catalytic Relaxase. Histidine 146, histidine 157, and histidine 159 together coordinate Mg(2+). Positions 950–1500 (GKEAVTPLME…LRDVAAGRAV (551 aa)) are DNA helicase I. 992-999 (GYAGVGKT) is an ATP binding site. Positions 1719–1753 (EQEAVREVARENLLQERLQQIERDMVRDLQKEKTL) form a coiled coil.

To TraI of plasmid F. Monomer. Part of the relaxosome, a complex composed of plasmid-encodes TraI, TraM, TraY and host-encoded IHF bound to the F plasmid origin of transfer (oriT). Directly contacts coupling protein TraD. Seems to directly contact TraM via its C-terminus. The cofactor is Mg(2+).

Its subcellular location is the cytoplasm. It carries out the reaction ATP-independent breakage of single-stranded DNA, followed by passage and rejoining.. The catalysed reaction is ATP + H2O = ADP + phosphate + H(+). Conjugative DNA transfer (CDT) is the unidirectional transfer of ssDNA plasmid from a donor to a recipient cell. It is the central mechanism by which antibiotic resistance and virulence factors are propagated in bacterial populations. Part of the relaxosome, which facilitates a site- and strand-specific cut in the origin of transfer by TraI, at the nic site. Relaxosome formation requires binding of IHF and TraY to the oriT region, which then facilitates binding of TraI relaxase. TraI forms a covalent 5'-phosphotyrosine intermediate linkage to the ssDNA. The transesterified T-strand moves from the donor cell to the recipient cell in a 5'to 3' direction, with the DNA helicase activity of TraI unwinding the DNA. DNA transfer occurs via the conjugative pore (transferosome) an intercellular junction mediated by a type IV secretion system, with TraD providing the means to link the relaxosome to the conjugative pore. The relaxase completes DNA transfer by reversing the covalent phosphotyrosine linkage and releasing the T-strand. Its function is as follows. TraI has also been identified as DNA helicase I. DNA. helicase I is a potent, highly processive DNA-dependent ATPase, able to unwind about 1.1 kb dsDNA per second in a 5' to 3' manner. This chain is Multifunctional conjugation protein TraI (traI), found in Escherichia coli.